The chain runs to 417 residues: NADH-quinone oxidoreductase subunit D (417 aa).

It belongs to the complex I 49 kDa subunit family. As to quaternary structure, NDH-1 is composed of 14 different subunits. Subunits NuoB, C, D, E, F, and G constitute the peripheral sector of the complex.

It is found in the cell inner membrane. It catalyses the reaction a quinone + NADH + 5 H(+)(in) = a quinol + NAD(+) + 4 H(+)(out). In terms of biological role, NDH-1 shuttles electrons from NADH, via FMN and iron-sulfur (Fe-S) centers, to quinones in the respiratory chain. The immediate electron acceptor for the enzyme in this species is believed to be ubiquinone. Couples the redox reaction to proton translocation (for every two electrons transferred, four hydrogen ions are translocated across the cytoplasmic membrane), and thus conserves the redox energy in a proton gradient. The protein is NADH-quinone oxidoreductase subunit D of Nitrosospira multiformis (strain ATCC 25196 / NCIMB 11849 / C 71).